We begin with the raw amino-acid sequence, 325 residues long: Inactive S-adenosylmethionine decarboxylase prozyme (325 aa).

The protein belongs to the eukaryotic AdoMetDC family. Forms a heterodimer with S-adenosylmethionine decarboxylase AdoMetDC; heterodimerization is required to activate AdoMetDC.

It functions in the pathway amine and polyamine biosynthesis; S-adenosylmethioninamine biosynthesis; S-adenosylmethioninamine from S-adenosyl-L-methionine: step 1/1. Probably has no catalytic activity due to the loss of several residues required for processing and catalysis. Forms a complex with S-adenosylmethionine decarboxylase AdoMetDC which is essential to activate AdoMetDC. Required for the biosynthesis of the polyamine spermidine. Required for growth and survival during the bloodstream life cycle stage. This chain is Inactive S-adenosylmethionine decarboxylase prozyme, found in Trypanosoma brucei brucei.